We begin with the raw amino-acid sequence, 341 residues long: Anthranilate phosphoribosyltransferase (341 aa).

Residues Gly79, 82–83, Thr87, 89–92, 107–115, and Ser119 contribute to the 5-phospho-alpha-D-ribose 1-diphosphate site; these read GD, NIST, and KHGNRAVSS. An anthranilate-binding site is contributed by Gly79. Ser91 is a Mg(2+) binding site. Asn110 lines the anthranilate pocket. Arg165 serves as a coordination point for anthranilate. Positions 224 and 225 each coordinate Mg(2+).

This sequence belongs to the anthranilate phosphoribosyltransferase family. As to quaternary structure, homodimer. It depends on Mg(2+) as a cofactor.

The enzyme catalyses N-(5-phospho-beta-D-ribosyl)anthranilate + diphosphate = 5-phospho-alpha-D-ribose 1-diphosphate + anthranilate. It functions in the pathway amino-acid biosynthesis; L-tryptophan biosynthesis; L-tryptophan from chorismate: step 2/5. In terms of biological role, catalyzes the transfer of the phosphoribosyl group of 5-phosphorylribose-1-pyrophosphate (PRPP) to anthranilate to yield N-(5'-phosphoribosyl)-anthranilate (PRA). This Bacillus cereus (strain ZK / E33L) protein is Anthranilate phosphoribosyltransferase.